Reading from the N-terminus, the 301-residue chain is Probable 5-dehydro-4-deoxyglucarate dehydratase (301 aa).

It belongs to the DapA family.

The enzyme catalyses 5-dehydro-4-deoxy-D-glucarate + H(+) = 2,5-dioxopentanoate + CO2 + H2O. Its pathway is carbohydrate acid metabolism; D-glucarate degradation; 2,5-dioxopentanoate from D-glucarate: step 2/2. In Allorhizobium ampelinum (strain ATCC BAA-846 / DSM 112012 / S4) (Agrobacterium vitis (strain S4)), this protein is Probable 5-dehydro-4-deoxyglucarate dehydratase.